We begin with the raw amino-acid sequence, 617 residues long: Proline--tRNA ligase (617 aa).

Belongs to the class-II aminoacyl-tRNA synthetase family. ProS type 1 subfamily. In terms of assembly, homodimer.

The protein localises to the cytoplasm. The catalysed reaction is tRNA(Pro) + L-proline + ATP = L-prolyl-tRNA(Pro) + AMP + diphosphate. Functionally, catalyzes the attachment of proline to tRNA(Pro) in a two-step reaction: proline is first activated by ATP to form Pro-AMP and then transferred to the acceptor end of tRNA(Pro). As ProRS can inadvertently accommodate and process non-cognate amino acids such as alanine and cysteine, to avoid such errors it has two additional distinct editing activities against alanine. One activity is designated as 'pretransfer' editing and involves the tRNA(Pro)-independent hydrolysis of activated Ala-AMP. The other activity is designated 'posttransfer' editing and involves deacylation of mischarged Ala-tRNA(Pro). The misacylated Cys-tRNA(Pro) is not edited by ProRS. The polypeptide is Proline--tRNA ligase (Streptococcus agalactiae serotype Ia (strain ATCC 27591 / A909 / CDC SS700)).